We begin with the raw amino-acid sequence, 90 residues long: Cell division protein CrgA (90 aa).

Residues 1-25 (MPKARVTKNETAPVSSNPSANRTPV) form a disordered region. Over residues 9-22 (NETAPVSSNPSANR) the composition is skewed to polar residues. Transmembrane regions (helical) follow at residues 38–58 (VIMF…YLVG) and 67–87 (LGAW…LMTM).

This sequence belongs to the CrgA family.

The protein resides in the cell membrane. In terms of biological role, involved in cell division. In Corynebacterium glutamicum (strain R), this protein is Cell division protein CrgA.